A 223-amino-acid polypeptide reads, in one-letter code: Large ribosomal subunit protein uL4 (223 aa).

Residues 47-72 (GTASTKTRGEVAGGGRKPWPQKHTGR) are disordered.

This sequence belongs to the universal ribosomal protein uL4 family. Part of the 50S ribosomal subunit.

In terms of biological role, one of the primary rRNA binding proteins, this protein initially binds near the 5'-end of the 23S rRNA. It is important during the early stages of 50S assembly. It makes multiple contacts with different domains of the 23S rRNA in the assembled 50S subunit and ribosome. Functionally, forms part of the polypeptide exit tunnel. This is Large ribosomal subunit protein uL4 from Fervidobacterium nodosum (strain ATCC 35602 / DSM 5306 / Rt17-B1).